A 161-amino-acid polypeptide reads, in one-letter code: Allophycocyanin beta chain (161 aa).

Asn-71 is modified (N4-methylasparagine). Position 81 (Cys-81) interacts with (2R,3E)-phycocyanobilin.

It belongs to the phycobiliprotein family. As to quaternary structure, heterodimer of an alpha and a beta chain. In terms of processing, contains one covalently linked phycocyanobilin chromophore.

It is found in the plastid. Its subcellular location is the chloroplast thylakoid membrane. In terms of biological role, light-harvesting photosynthetic bile pigment-protein from the phycobiliprotein complex. Allophycocyanin has a maximum absorption at approximately 650 nanometers. This is Allophycocyanin beta chain (apcB) from Cyanidium caldarium (Red alga).